Reading from the N-terminus, the 447-residue chain is 1-aminocyclopropane-1-carboxylate synthase 7 (447 aa).

Substrate-binding residues include glutamate 61 and tyrosine 100. The residue at position 285 (lysine 285) is an N6-(pyridoxal phosphate)lysine.

The protein belongs to the class-I pyridoxal-phosphate-dependent aminotransferase family. Homodimer and heterodimer. In vivo, the relevance of heterodimerization with other ACS enzymes is however unsure. Interacts with XBAT32. Pyridoxal 5'-phosphate serves as cofactor. Post-translationally, ubiquitinated by XBAT32. Ubiquitination probably leads to its subsequent degradation, thus controlling ethylene production. In terms of tissue distribution, expressed in roots.

It catalyses the reaction S-adenosyl-L-methionine = 1-aminocyclopropane-1-carboxylate + S-methyl-5'-thioadenosine + H(+). It functions in the pathway alkene biosynthesis; ethylene biosynthesis via S-adenosyl-L-methionine; ethylene from S-adenosyl-L-methionine: step 1/2. 1-aminocyclopropane-1-carboxylate synthase (ACS) enzymes catalyze the conversion of S-adenosyl-L-methionine (SAM) into 1-aminocyclopropane-1-carboxylate (ACC), a direct precursor of ethylene. The sequence is that of 1-aminocyclopropane-1-carboxylate synthase 7 (ACS7) from Arabidopsis thaliana (Mouse-ear cress).